The chain runs to 209 residues: Large ribosomal subunit protein bL9 (209 aa).

Positions 184 to 209 are disordered; it reads SAASEDSDLVETPEDRATEEAEDEQP.

The protein belongs to the bacterial ribosomal protein bL9 family.

Functionally, binds to the 23S rRNA. The polypeptide is Large ribosomal subunit protein bL9 (Dinoroseobacter shibae (strain DSM 16493 / NCIMB 14021 / DFL 12)).